The sequence spans 254 residues: MAIANKNIIFVAGLGGIGLDTSKGIVKAGPKNLVILDRIENPAAIAELKAINPKVTVTFYPYDVTVPLAETKKLLTTIFAKLKTVDLLINGAGILNDHQIELTIAINFTGLVNTTTAIMDFWDKRKGGPGGAIANICSVTGFNAIYQVPVYSASKAAVVSFTSSLAKLAPITGVIAYSINPGITKTTLVHKFNSWLDVEPRVAELLDEHPTQTTTQCSQNFVKAIEANQNGAIWKLDLGRLDAVNWTKHWDSGI.

10–33 (FVAGLGGIGLDTSKGIVKAGPKNL) contributes to the NAD(+) binding site. A substrate-binding site is contributed by Ser-138. Tyr-151 serves as the catalytic Proton acceptor.

Belongs to the short-chain dehydrogenases/reductases (SDR) family. Homodimer.

It carries out the reaction a primary alcohol + NAD(+) = an aldehyde + NADH + H(+). The catalysed reaction is a secondary alcohol + NAD(+) = a ketone + NADH + H(+). The sequence is that of Alcohol dehydrogenase (Adh) from Drosophila immigrans (Fruit fly).